Consider the following 227-residue polypeptide: N-acetyltransferase family 8 member 7 (227 aa).

2 helical membrane passes run 36–56 (MLLLPRTLLLLLGVPLTLFLA) and 58–78 (GSWLLVLLSILTLFLSLWFLA). An N-acetyltransferase domain is found at 61 to 220 (LLVLLSILTL…PMINLKYSLT (160 aa)).

It belongs to the camello family.

It is found in the membrane. It catalyses the reaction L-lysyl-[protein] + acetyl-CoA = N(6)-acetyl-L-lysyl-[protein] + CoA + H(+). In terms of biological role, has histone acetyltransferase activity in vitro, with specificity for histone H4. The chain is N-acetyltransferase family 8 member 7 from Mus musculus (Mouse).